A 415-amino-acid polypeptide reads, in one-letter code: 4-hydroxy-3-methylbut-2-en-1-yl diphosphate synthase (flavodoxin) (415 aa).

[4Fe-4S] cluster contacts are provided by Cys298, Cys301, Cys344, and Glu351.

It belongs to the IspG family. [4Fe-4S] cluster is required as a cofactor.

The catalysed reaction is (2E)-4-hydroxy-3-methylbut-2-enyl diphosphate + oxidized [flavodoxin] + H2O + 2 H(+) = 2-C-methyl-D-erythritol 2,4-cyclic diphosphate + reduced [flavodoxin]. It functions in the pathway isoprenoid biosynthesis; isopentenyl diphosphate biosynthesis via DXP pathway; isopentenyl diphosphate from 1-deoxy-D-xylulose 5-phosphate: step 5/6. Its function is as follows. Converts 2C-methyl-D-erythritol 2,4-cyclodiphosphate (ME-2,4cPP) into 1-hydroxy-2-methyl-2-(E)-butenyl 4-diphosphate. The sequence is that of 4-hydroxy-3-methylbut-2-en-1-yl diphosphate synthase (flavodoxin) from Solibacter usitatus (strain Ellin6076).